The chain runs to 267 residues: Indole-3-glycerol phosphate synthase (267 aa).

Belongs to the TrpC family.

It catalyses the reaction 1-(2-carboxyphenylamino)-1-deoxy-D-ribulose 5-phosphate + H(+) = (1S,2R)-1-C-(indol-3-yl)glycerol 3-phosphate + CO2 + H2O. It participates in amino-acid biosynthesis; L-tryptophan biosynthesis; L-tryptophan from chorismate: step 4/5. In Cupriavidus taiwanensis (strain DSM 17343 / BCRC 17206 / CCUG 44338 / CIP 107171 / LMG 19424 / R1) (Ralstonia taiwanensis (strain LMG 19424)), this protein is Indole-3-glycerol phosphate synthase.